The primary structure comprises 247 residues: 3-deoxy-manno-octulosonate cytidylyltransferase (247 aa).

The protein belongs to the KdsB family.

It localises to the cytoplasm. The enzyme catalyses 3-deoxy-alpha-D-manno-oct-2-ulosonate + CTP = CMP-3-deoxy-beta-D-manno-octulosonate + diphosphate. It participates in nucleotide-sugar biosynthesis; CMP-3-deoxy-D-manno-octulosonate biosynthesis; CMP-3-deoxy-D-manno-octulosonate from 3-deoxy-D-manno-octulosonate and CTP: step 1/1. It functions in the pathway bacterial outer membrane biogenesis; lipopolysaccharide biosynthesis. In terms of biological role, activates KDO (a required 8-carbon sugar) for incorporation into bacterial lipopolysaccharide in Gram-negative bacteria. In Methylorubrum populi (strain ATCC BAA-705 / NCIMB 13946 / BJ001) (Methylobacterium populi), this protein is 3-deoxy-manno-octulosonate cytidylyltransferase.